An 816-amino-acid chain; its full sequence is Sodium/hydrogen exchanger 1 (816 aa).

Over 1-98 (MLLWSAVRGL…FPVLGIDYTH (98 aa)) the chain is Extracellular. A compositionally biased stretch (polar residues) spans 37–50 (LQLSPTDSTTPDSQ). The tract at residues 37 to 79 (LQLSPTDSTTPDSQPSRERSIGDVTTAPPEVTPESRPVNRSVT) is disordered. N75 is a glycosylation site (N-linked (GlcNAc...) asparagine). The helical transmembrane segment at 99 to 121 (VRTPFEISLWILLACLMKIGFHV) threads the bilayer. The Cytoplasmic portion of the chain corresponds to 122–130 (IPTISSIVP). A helical membrane pass occupies residues 131 to 148 (ESCLLIVVGLLVGGLIKG). Residues 149-158 (VGEKPPFLQS) are Extracellular-facing. Residues 159–176 (EVFFLFLLPPIILDAGYF) form a helical membrane-spanning segment. Over 177–186 (LPLRQFTENL) the chain is Cytoplasmic. Residues 187 to 215 (GTILIFAVVGTLWNAFFLGGLMYAVCLVG) form a helical membrane-spanning segment. The Extracellular portion of the chain corresponds to 216–222 (GEQINNI). The chain crosses the membrane as a helical span at residues 223 to 249 (GLLDNLLFGSIISAVDPVAVLAVFEEI). The Cytoplasmic segment spans residues 250-252 (HIN). A helical membrane pass occupies residues 253–283 (ELLHILVFGESLLNDAVTVVLYHLFEEFANY). Residues 284-287 (DHVG) lie on the Extracellular side of the membrane. Residues 288 to 322 (IVDIVLGFLSFFVVALGGVFVGVVYGVIAAFTSRF) traverse the membrane as a helical segment. At 323–328 (TAHIRV) the chain is on the cytoplasmic side. Residues 329 to 341 (IEPLFVFLYSYMA) form a helical membrane-spanning segment. The Extracellular portion of the chain corresponds to 342–350 (YLSAELFHL). The helical transmembrane segment at 351–371 (SGIMALIASGVVMRPYVEANI) threads the bilayer. At 372–373 (SH) the chain is on the cytoplasmic side. Residues 374-404 (KSHTTIKYFLKMWSSVSETLIFIFLGVSTVA) traverse the membrane as a helical segment. Over 405–410 (GSHHWN) the chain is Extracellular. A helical membrane pass occupies residues 411–438 (WTFVISTLLFCLIARVLGVLGLTWFINK). The Cytoplasmic portion of the chain corresponds to 439–444 (FRIVKL). A helical transmembrane segment spans residues 445-469 (TPKDQFIIAYGGLRGAIAFSLGYLL). At 470–475 (DKKHFP) the chain is on the extracellular side. A helical transmembrane segment spans residues 476–505 (MCDLFLTAIITVIFFTVFVQGMTIRPLVDL). Positions 503–545 (VDLLAVKKKQETKRSINEEIHTQFLDHLLTGIEDICGHYGHHH) are interaction with TESC. Topologically, residues 506–816 (LAVKKKQETK…EGEPFIPKGQ (311 aa)) are cytoplasmic. The interval 509–516 (KKKQETKR) is PI(4,5)P2-binding region. The interval 515–545 (KRSINEEIHTQFLDHLLTGIEDICGHYGHHH) is interaction with CHP2. Residues 540–545 (HYGHHH) are confers pH-dependent PI(4,5)P2 binding. The PI(4,5)P2-binding region stretch occupies residues 552-560 (RFNKKYVKK). Phosphoserine occurs at positions 599 and 602. T603 is modified (phosphothreonine). 2 positions are modified to phosphoserine: S605 and S648. The interval 633–816 (KILRNNLQKT…EGEPFIPKGQ (184 aa)) is interaction with TESC. The segment at 633 to 816 (KILRNNLQKT…EGEPFIPKGQ (184 aa)) is interaction with CALM1. The interaction with PPP3CA stretch occupies residues 684–687 (LTVP). Phosphoserine is present on residues S693, S697, and S703. The tract at residues 715-720 (PVITID) is interaction with PPP3CA. Phosphoserine is present on residues S723, S726, S729, S786, S788, and S797. The segment at 748-816 (PRVAEEAAEE…EGEPFIPKGQ (69 aa)) is disordered. A compositionally biased stretch (polar residues) spans 783–792 (PSDSPSSQRM).

It belongs to the monovalent cation:proton antiporter 1 (CPA1) transporter (TC 2.A.36) family. In terms of assembly, homodimer; dimerization is crucial for its function. Oligomer. Interacts with CALM in a calcium-dependent manner. Interacts with TESC. Interacts (via the juxtamembrane region of the cytoplasmic C-terminal domain) with CHP1; the interaction occurs at the plasma membrane in a calcium-dependent manner. Interacts with CHP2; the interaction occurs in a calcium-dependent manner. Interacts with EZR; regulates the cytoskeletal interactions of SLC9A1 and promotes stress fiber formation. In terms of processing, ubiquitinated, leading to its degradation by the proteasome. Ubiquitination is reduced by CHP1. Post-translationally, O-glycosylated. Palmitoylated; may play a major role in SLC9A1 regulation. In terms of processing, phosphorylation at Ser-648 by AKT1 reduces SLC9A1 binding to CALM1. Kidney and intestine.

Its subcellular location is the cell membrane. The protein localises to the basolateral cell membrane. It carries out the reaction Na(+)(in) + H(+)(out) = Na(+)(out) + H(+)(in). The enzyme catalyses Li(+)(out) + H(+)(in) = Li(+)(in) + H(+)(out). It catalyses the reaction Li(+)(in) + Na(+)(out) = Li(+)(out) + Na(+)(in). With respect to regulation, activated at acidic pHs. Inhibited by cariporide and eniporide. Phosphatidylinositol 4,5-bisphosphate (PI(4,5)P2) and phosphatidylinositol 3,4,5-trisphosphate (PI(3,4,5)P3) bind and differentially regulate SLC9A1 activity. In terms of biological role, electroneutral Na(+) /H(+) antiporter that extrudes Na(+) in exchange for external protons driven by the inward sodium ion chemical gradient, protecting cells from acidification that occurs from metabolism. Exchanges intracellular H(+) ions for extracellular Na(+) in 1:1 stoichiometry. Plays a key role in maintening intracellular pH neutral and cell volume, and thus is important for cell growth, proliferation, migration and survival. In addition, can transport lithium Li(+) and functions also as a Na(+)/Li(+) antiporter. SLC9A1 also functions in membrane anchoring and organization of scaffolding complexes that coordinate signaling inputs. In Oryctolagus cuniculus (Rabbit), this protein is Sodium/hydrogen exchanger 1 (SLC9A1).